The following is a 229-amino-acid chain: Orotidine 5'-phosphate decarboxylase (229 aa).

Residues D10, K32, 59 to 68, T119, R180, Q189, G209, and R210 each bind substrate; that span reads DLKFHDIPNT. The Proton donor role is filled by K61.

The protein belongs to the OMP decarboxylase family. Type 1 subfamily. Homodimer.

The enzyme catalyses orotidine 5'-phosphate + H(+) = UMP + CO2. It functions in the pathway pyrimidine metabolism; UMP biosynthesis via de novo pathway; UMP from orotate: step 2/2. Its function is as follows. Catalyzes the decarboxylation of orotidine 5'-monophosphate (OMP) to uridine 5'-monophosphate (UMP). The chain is Orotidine 5'-phosphate decarboxylase from Legionella pneumophila (strain Corby).